The following is a 206-amino-acid chain: Ras-related protein Rab-14 (206 aa).

GTP is bound at residue 15 to 22 (GDMGVGKS). The Effector region motif lies at 37–45 (SPHTIGVEF). Residues 63 to 67 (DTAGQ) and 121 to 124 (NKKD) each bind GTP. Residues 182 to 206 (PDGGITKNPPQTITDKPQDASKCSC) are disordered. Residues 189-206 (NPPQTITDKPQDASKCSC) show a composition bias toward polar residues. Residues C204 and C206 are each lipidated (S-geranylgeranyl cysteine). At C206 the chain carries Cysteine methyl ester.

The protein belongs to the small GTPase superfamily. Rab family.

Its subcellular location is the endosome. The protein localises to the contractile vacuole. It localises to the membrane. It carries out the reaction GTP + H2O = GDP + phosphate + H(+). Its activity is regulated as follows. Rab activation is generally mediated by a guanine exchange factor (GEF), while inactivation through hydrolysis of bound GTP is catalyzed by a GTPase activating protein (GAP). That Rab is activated by the DENND6A and DENND6B guanine exchange factors (GEF). Functionally, the small GTPases Rab are key regulators of intracellular membrane trafficking, from the formation of transport vesicles to their fusion with membranes. Rabs cycle between an inactive GDP-bound form and an active GTP-bound form that is able to recruit to membranes different set of downstream effectors directly responsible for vesicle formation, movement, tethering and fusion. Regulates the fusion of phagosomes and lysosomes. The chain is Ras-related protein Rab-14 (rab14) from Dictyostelium discoideum (Social amoeba).